A 149-amino-acid polypeptide reads, in one-letter code: Transcriptional repressor NrdR (149 aa).

A zinc finger spans residues cysteine 3–cysteine 34. The ATP-cone domain occupies proline 49–glutamine 139.

It belongs to the NrdR family. It depends on Zn(2+) as a cofactor.

Functionally, negatively regulates transcription of bacterial ribonucleotide reductase nrd genes and operons by binding to NrdR-boxes. This chain is Transcriptional repressor NrdR, found in Pasteurella multocida (strain Pm70).